The primary structure comprises 430 residues: 5-methylthioadenosine/S-adenosylhomocysteine deaminase (430 aa).

Histidine 63 and histidine 65 together coordinate Zn(2+). 3 residues coordinate substrate: glutamate 92, arginine 144, and histidine 182. Histidine 209 provides a ligand contact to Zn(2+). 2 residues coordinate substrate: glutamate 212 and aspartate 297. Aspartate 297 is a Zn(2+) binding site.

The protein belongs to the metallo-dependent hydrolases superfamily. MTA/SAH deaminase family. Zn(2+) serves as cofactor.

It catalyses the reaction S-adenosyl-L-homocysteine + H2O + H(+) = S-inosyl-L-homocysteine + NH4(+). The catalysed reaction is S-methyl-5'-thioadenosine + H2O + H(+) = S-methyl-5'-thioinosine + NH4(+). In terms of biological role, catalyzes the deamination of 5-methylthioadenosine and S-adenosyl-L-homocysteine into 5-methylthioinosine and S-inosyl-L-homocysteine, respectively. Is also able to deaminate adenosine. The protein is 5-methylthioadenosine/S-adenosylhomocysteine deaminase of Desulforudis audaxviator (strain MP104C).